Here is an 821-residue protein sequence, read N- to C-terminus: Leucine--tRNA ligase (821 aa).

The 'HIGH' region motif lies at Pro-44 to His-54. The short motif at Lys-589–Ser-593 is the 'KMSKS' region element. Lys-592 serves as a coordination point for ATP.

The protein belongs to the class-I aminoacyl-tRNA synthetase family.

Its subcellular location is the cytoplasm. The catalysed reaction is tRNA(Leu) + L-leucine + ATP = L-leucyl-tRNA(Leu) + AMP + diphosphate. This chain is Leucine--tRNA ligase, found in Campylobacter curvus (strain 525.92).